The sequence spans 441 residues: Protein kinase C and casein kinase substrate in neurons protein 1 (441 aa).

2 positions are modified to phosphoserine: serine 2 and serine 76. The 271-residue stretch at 10-280 (EEITDSFWEV…AIRGADAQED (271 aa)) folds into the F-BAR domain. Positions 23 to 272 (KRTVKRIDDG…HVYRELEQAI (250 aa)) form a coiled coil. A Phosphothreonine modification is found at threonine 181. Residues 310–380 (AAKKEKQPKK…ANGGANPFED (71 aa)) form a disordered region. Positions 311-321 (AKKEKQPKKAE) are enriched in basic and acidic residues. Residues 326 to 348 (SNATGAVESTSQAGDRGSVSSYD) show a composition bias toward polar residues. Phosphoserine occurs at positions 343, 345, 346, 358, and 362. Residues 382–441 (AKGVRVRALYDYDGQEQDELSFKAGDELTKLGEEDEQGWCRGRLDSGQLGLYPANYVEAI) form the SH3 domain. Tyrosine 391 is modified (phosphotyrosine). Phosphoserine occurs at positions 402 and 427.

Belongs to the PACSIN family. As to quaternary structure, homodimer. May form heterooligomers with other PACSINs. Interacts with MAPT. Interacts with TRPV4. Interacts (via SH3 domain) with SYNJ1 and WASL. Interacts (via SH3 domain) with DNM1; the interaction is reduced by DNM1 phosphorylation. Interacts with DNM2 and DNM3. Interacts with both COBL and DBNL. Identified in a complex composed of COBL, PACSIN1 and WASL. Interacts with EHD1 and EHD3. Phosphorylated by casein kinase 2 (CK2) and protein kinase C (PKC). In terms of tissue distribution, highly expressed in brain (at protein level).

The protein resides in the cytoplasm. It localises to the cell projection. It is found in the synapse. Its subcellular location is the synaptosome. The protein localises to the ruffle membrane. The protein resides in the membrane. It localises to the cytoplasmic vesicle membrane. It is found in the cytosol. Its subcellular location is the cell membrane. Functionally, binds to membranes via its F-BAR domain and mediates membrane tubulation. Plays a role in the reorganization of the microtubule cytoskeleton via its interaction with MAPT; this decreases microtubule stability and inhibits MAPT-induced microtubule polymerization. Plays a role in cellular transport processes by recruiting DNM1, DNM2 and DNM3 to membranes. Plays a role in the reorganization of the actin cytoskeleton and in neuron morphogenesis via its interaction with COBL and WASL, and by recruiting COBL to the cell cortex. Plays a role in the regulation of neurite formation, neurite branching and the regulation of neurite length. Required for normal synaptic vesicle endocytosis; this process retrieves previously released neurotransmitters to accommodate multiple cycles of neurotransmission. Required for normal excitatory and inhibitory synaptic transmission. The chain is Protein kinase C and casein kinase substrate in neurons protein 1 (Pacsin1) from Rattus norvegicus (Rat).